The primary structure comprises 737 residues: MAKQVFQTTFAGRELIVETGQVAKQANGSVVVRYGESTVLTAAVMSKKMATGDFFPLQVNYEEKMYAAGKFPGGFMKREGRPSTDATLTARLIDRPIRPMFAEGFRNEVQVINTVLSYDENASAPMAAMFGSSLALSISDIPFDGPIAGVQVGYVDGQIIINPSQEQAEQSLLELTVAGTKHAINMVESGAKELSEEIMLEALLKGHEAVKELIAFQEEIVAAVGKEKAEVELLHVDAELQAEIIAAYNSDLQKAVQVEEKLAREAATQAVKDQVTAVYEEKYADHEEFDRIMRDVAEILEQMEHAEVRRLITEDKVRPDGRKVDEIRPLDAVVDFLPRVHGSGLFTRGQTQALSVLTLAPMGETQIIDGLDPEYKKRFMHHYNFPQYSVGETGRYGAPGRREIGHGALGERALAQVLPSLEEFPYAIRLVAEVLESNGSSSQASICAGTLALMAGGVPIKAPVAGIAMGLISDGNNYTVLTDIQGLEDHFGDMDFKVAGTRDGITALQMDIKIQGITAEILTEALAQAKKARFEILDVIEATIPEVRPELAPTAPKIDTIKIDVDKIKIVIGKGGETIDKIIAETGVKIDIDEEGNVSIYSSDQDAINRAKEIIAGLVREAKVDEVYRAKVVRIEKFGAFVNLFDKTDALVHISEMAWTRTNRVEDLVEIGDEVDVKVIKIDEKGRIDASMKALLPRPPKPEHDEKGEKSERPHRPRHHKDHKPKKEFTETPKDSE.

Mg(2+) contacts are provided by Asp489 and Asp495. The region spanning 556-615 (PKIDTIKIDVDKIKIVIGKGGETIDKIIAETGVKIDIDEEGNVSIYSSDQDAINRAKEII) is the KH domain. The region spanning 625–693 (DEVYRAKVVR…EKGRIDASMK (69 aa)) is the S1 motif domain. Positions 691–737 (SMKALLPRPPKPEHDEKGEKSERPHRPRHHKDHKPKKEFTETPKDSE) are disordered. The span at 700-714 (PKPEHDEKGEKSERP) shows a compositional bias: basic and acidic residues. Over residues 715-724 (HRPRHHKDHK) the composition is skewed to basic residues. The segment covering 725–737 (PKKEFTETPKDSE) has biased composition (basic and acidic residues).

This sequence belongs to the polyribonucleotide nucleotidyltransferase family. The cofactor is Mg(2+).

The protein resides in the cytoplasm. It carries out the reaction RNA(n+1) + phosphate = RNA(n) + a ribonucleoside 5'-diphosphate. Functionally, involved in mRNA degradation. Catalyzes the phosphorolysis of single-stranded polyribonucleotides processively in the 3'- to 5'-direction. The sequence is that of Polyribonucleotide nucleotidyltransferase from Streptococcus pneumoniae (strain Taiwan19F-14).